The sequence spans 292 residues: Proteasome subunit beta (292 aa).

Residues 1 to 62 (MSESLGSVPG…HRAADDIPHG (62 aa)) constitute a propeptide, removed in mature form; by autocatalysis. Threonine 63 (nucleophile) is an active-site residue.

The protein belongs to the peptidase T1B family. As to quaternary structure, the 20S proteasome core is composed of 14 alpha and 14 beta subunits that assemble into four stacked heptameric rings, resulting in a barrel-shaped structure. The two inner rings, each composed of seven catalytic beta subunits, are sandwiched by two outer rings, each composed of seven alpha subunits. The catalytic chamber with the active sites is on the inside of the barrel. Has a gated structure, the ends of the cylinder being occluded by the N-termini of the alpha-subunits. Is capped by the proteasome-associated ATPase, ARC.

The protein localises to the cytoplasm. The enzyme catalyses Cleavage of peptide bonds with very broad specificity.. It participates in protein degradation; proteasomal Pup-dependent pathway. With respect to regulation, the formation of the proteasomal ATPase ARC-20S proteasome complex, likely via the docking of the C-termini of ARC into the intersubunit pockets in the alpha-rings, may trigger opening of the gate for substrate entry. Interconversion between the open-gate and close-gate conformations leads to a dynamic regulation of the 20S proteasome proteolysis activity. Component of the proteasome core, a large protease complex with broad specificity involved in protein degradation. This chain is Proteasome subunit beta, found in Gordonia bronchialis (strain ATCC 25592 / DSM 43247 / BCRC 13721 / JCM 3198 / KCTC 3076 / NBRC 16047 / NCTC 10667) (Rhodococcus bronchialis).